Reading from the N-terminus, the 990-residue chain is Type III restriction-modification enzyme StyLTI Res subunit (990 aa).

Residues 50-545 form a helicase-like domain region; it reads NIDVKMETGT…GLRLPVDENG (496 aa). The VRR-NUC domain occupies 884 to 970; it reads LLKYDYPQQV…RQNINVEFAE (87 aa). Residues 913–937 are endonuclease domain; the sequence is STTPDFVYRIERQDADSVYLLVETK.

The protein belongs to the type III restriction-modification system Res protein family. Contains two different subunits: Res and Mod. Mg(2+) is required as a cofactor. Requires S-adenosyl-L-methionine as cofactor.

It catalyses the reaction Endonucleolytic cleavage of DNA to give specific double-stranded fragments with terminal 5'-phosphates.. In terms of biological role, a type III restriction enzyme that recognizes 2 inversely oriented double-stranded sequences 5'-CAGAG-3' and cleaves DNA 25-27 base pairs downstream. After binding to one recognition site undergoes random one-dimensional diffusion along DNA until it collides with a stationary enzyme bound to the second DNA site, which is when DNA cleavage occurs. DNA restriction requires both the Res and Mod subunits. In Salmonella typhimurium (strain LT2 / SGSC1412 / ATCC 700720), this protein is Type III restriction-modification enzyme StyLTI Res subunit.